The primary structure comprises 319 residues: ATP-dependent 6-phosphofructokinase (319 aa).

Gly11 provides a ligand contact to ATP. Residue 21 to 25 participates in ADP binding; it reads RAVVR. ATP contacts are provided by residues 72 to 73 and 102 to 105; these read RC and GDGS. Residue Asp103 coordinates Mg(2+). Residue 125–127 coordinates substrate; the sequence is TID. Residue Asp127 is the Proton acceptor of the active site. Arg154 is a binding site for ADP. Substrate contacts are provided by residues Arg162 and 169-171; that span reads MGR. Residues 185-187, Arg211, and 213-215 contribute to the ADP site; these read GAE and KKH. Substrate contacts are provided by residues Glu222, Arg243, and 249 to 252; that span reads HIQR.

The protein belongs to the phosphofructokinase type A (PFKA) family. ATP-dependent PFK group I subfamily. Prokaryotic clade 'B1' sub-subfamily. In terms of assembly, homotetramer. Mg(2+) serves as cofactor.

It is found in the cytoplasm. The catalysed reaction is beta-D-fructose 6-phosphate + ATP = beta-D-fructose 1,6-bisphosphate + ADP + H(+). It participates in carbohydrate degradation; glycolysis; D-glyceraldehyde 3-phosphate and glycerone phosphate from D-glucose: step 3/4. Its activity is regulated as follows. Allosterically activated by ADP and other diphosphonucleosides, and allosterically inhibited by phosphoenolpyruvate. In terms of biological role, catalyzes the phosphorylation of D-fructose 6-phosphate to fructose 1,6-bisphosphate by ATP, the first committing step of glycolysis. The polypeptide is ATP-dependent 6-phosphofructokinase (Bacillus licheniformis (strain ATCC 14580 / DSM 13 / JCM 2505 / CCUG 7422 / NBRC 12200 / NCIMB 9375 / NCTC 10341 / NRRL NRS-1264 / Gibson 46)).